The sequence spans 185 residues: Ribosome-recycling factor (185 aa).

This sequence belongs to the RRF family.

It is found in the cytoplasm. Functionally, responsible for the release of ribosomes from messenger RNA at the termination of protein biosynthesis. May increase the efficiency of translation by recycling ribosomes from one round of translation to another. The chain is Ribosome-recycling factor from Chromohalobacter salexigens (strain ATCC BAA-138 / DSM 3043 / CIP 106854 / NCIMB 13768 / 1H11).